We begin with the raw amino-acid sequence, 830 residues long: Lon protease (830 aa).

A Lon N-terminal domain is found at 20-215 (LPAVAIRDVV…LLIKILANEV (196 aa)). 367–374 (GPPGVGKT) serves as a coordination point for ATP. The region spanning 602 to 781 (ENGVGISTGL…DEIVKIAFEK (180 aa)) is the Lon proteolytic domain. Active-site residues include serine 687 and lysine 730. Residues 784-830 (PKSSFKKSKTAPKKESAKKAAKSKKPAVKKPAVKKTKQVKKTAKKKK) are disordered. Residues 802-830 (KAAKSKKPAVKKPAVKKTKQVKKTAKKKK) are compositionally biased toward basic residues.

This sequence belongs to the peptidase S16 family. In terms of assembly, homohexamer. Organized in a ring with a central cavity.

The protein localises to the cytoplasm. The enzyme catalyses Hydrolysis of proteins in presence of ATP.. In terms of biological role, ATP-dependent serine protease that mediates the selective degradation of mutant and abnormal proteins as well as certain short-lived regulatory proteins. Required for cellular homeostasis and for survival from DNA damage and developmental changes induced by stress. Degrades polypeptides processively to yield small peptide fragments that are 5 to 10 amino acids long. Binds to DNA in a double-stranded, site-specific manner. This Elusimicrobium minutum (strain Pei191) protein is Lon protease.